A 123-amino-acid polypeptide reads, in one-letter code: Small ribosomal subunit protein uS12 (123 aa).

The disordered stretch occupies residues M1 to G32. The segment covering R9–V19 has biased composition (basic residues). A 3-methylthioaspartic acid modification is found at D89.

The protein belongs to the universal ribosomal protein uS12 family. As to quaternary structure, part of the 30S ribosomal subunit. Contacts proteins S8 and S17. May interact with IF1 in the 30S initiation complex.

Functionally, with S4 and S5 plays an important role in translational accuracy. Its function is as follows. Interacts with and stabilizes bases of the 16S rRNA that are involved in tRNA selection in the A site and with the mRNA backbone. Located at the interface of the 30S and 50S subunits, it traverses the body of the 30S subunit contacting proteins on the other side and probably holding the rRNA structure together. The combined cluster of proteins S8, S12 and S17 appears to hold together the shoulder and platform of the 30S subunit. The protein is Small ribosomal subunit protein uS12 of Corynebacterium kroppenstedtii (strain DSM 44385 / JCM 11950 / CIP 105744 / CCUG 35717).